The sequence spans 458 residues: Exodeoxyribonuclease 7 large subunit (458 aa).

The protein belongs to the XseA family. Heterooligomer composed of large and small subunits.

It is found in the cytoplasm. The catalysed reaction is Exonucleolytic cleavage in either 5'- to 3'- or 3'- to 5'-direction to yield nucleoside 5'-phosphates.. Its function is as follows. Bidirectionally degrades single-stranded DNA into large acid-insoluble oligonucleotides, which are then degraded further into small acid-soluble oligonucleotides. The polypeptide is Exodeoxyribonuclease 7 large subunit (Escherichia coli O6:H1 (strain CFT073 / ATCC 700928 / UPEC)).